A 117-amino-acid chain; its full sequence is Ribonuclease P protein component (117 aa).

This sequence belongs to the RnpA family. Consists of a catalytic RNA component (M1 or rnpB) and a protein subunit.

It carries out the reaction Endonucleolytic cleavage of RNA, removing 5'-extranucleotides from tRNA precursor.. Functionally, RNaseP catalyzes the removal of the 5'-leader sequence from pre-tRNA to produce the mature 5'-terminus. It can also cleave other RNA substrates such as 4.5S RNA. The protein component plays an auxiliary but essential role in vivo by binding to the 5'-leader sequence and broadening the substrate specificity of the ribozyme. This chain is Ribonuclease P protein component, found in Lactococcus lactis subsp. cremoris (strain MG1363).